The following is a 110-amino-acid chain: Small ribosomal subunit protein bS16 (110 aa).

The tract at residues 84-110 (KREARNNPEKAVPRKERKAAAEAAAKK) is disordered.

This sequence belongs to the bacterial ribosomal protein bS16 family.

This Rhodopseudomonas palustris (strain BisB18) protein is Small ribosomal subunit protein bS16.